Reading from the N-terminus, the 440-residue chain is Serine protease inhibitor A3G (440 aa).

Positions 357 to 382 (GTEAAAATGMAGVGCCAVFDFLEIFF) are RCL.

It belongs to the serpin family. As to expression, expressed in bone marrow (particularly hematopoietic stem cells), heart, kidney, liver, lung, skeletal muscle, spleen, testis, thymus and T-cells.

It localises to the cytoplasm. Its subcellular location is the nucleus. Serine and cysteine protease inhibitor. Can inhibit lysosomal papain-like proteases including the cathepsins B, G, H, K, L and V. Ineffective against elastase, granzyme A, granzyme B, or caspases 3, 8 or 9. Inhibition of cytoplasmic cathepsin B following release from the lysosome may protect cells from apoptosis. This may facilitate the survival of progenitor T-cells and the subsequent development of long term memory CD8 T-cells. This chain is Serine protease inhibitor A3G (Serpina3g), found in Mus musculus (Mouse).